A 757-amino-acid chain; its full sequence is Lysyl oxidase homolog 4 (757 aa).

Positions 1-25 (MMWPQPPTFSLFLLLLLSQAPSSRP) are cleaved as a signal peptide. 4 SRCR domains span residues 33 to 134 (LRLV…VVCH), 160 to 288 (VRLK…VSCV), 312 to 412 (VRLR…VRCN), and 422 to 530 (VRLA…VACM). Disulfide bonds link C59–C123, C72–C133, C103–C113, C192–C277, C205–C287, C252–C262, C337–C401, C350–C411, C381–C391, C451–C516, C464–C529, C498–C508, C559–C565, C611–C659, C643–C649, C671–C681, and C718–C732. A glycan (N-linked (GlcNAc...) asparagine) is linked at N199. Residues 534 to 737 (PDLVMNAQLV…WLHNCHTGDS (204 aa)) are lysyl-oxidase like. Cu cation is bound by residues H612, H614, and H616. N-linked (GlcNAc...) asparagine glycosylation occurs at N630. The segment at residues 639-675 (KASFCLEDTNCPSGVQRRYACANFGEQGVAVGCWDTY) is a cross-link (lysine tyrosylquinone (Lys-Tyr)). Y675 is subject to 2',4',5'-topaquinone.

It belongs to the lysyl oxidase family. Cu cation is required as a cofactor. It depends on lysine tyrosylquinone residue as a cofactor. The lysine tyrosylquinone cross-link (LTQ) is generated by condensation of the epsilon-amino group of a lysine with a topaquinone produced by oxidation of tyrosine. In terms of processing, may be proteolytically cleaved by BMP1.

The protein localises to the secreted. The protein resides in the extracellular space. The catalysed reaction is L-lysyl-[protein] + O2 + H2O = (S)-2-amino-6-oxohexanoyl-[protein] + H2O2 + NH4(+). Catalyzes the oxidative deamination of lysine and hydroxylysine residues in collagen and elastin, resulting in the formation of covalent cross-linkages, and the stabilization of collagen and elastin fibers. In Mus musculus (Mouse), this protein is Lysyl oxidase homolog 4 (Loxl4).